We begin with the raw amino-acid sequence, 151 residues long: 3-hydroxyacyl-[acyl-carrier-protein] dehydratase FabZ (151 aa).

Histidine 49 is an active-site residue.

This sequence belongs to the thioester dehydratase family. FabZ subfamily.

It is found in the cytoplasm. It carries out the reaction a (3R)-hydroxyacyl-[ACP] = a (2E)-enoyl-[ACP] + H2O. In terms of biological role, involved in unsaturated fatty acids biosynthesis. Catalyzes the dehydration of short chain beta-hydroxyacyl-ACPs and long chain saturated and unsaturated beta-hydroxyacyl-ACPs. The sequence is that of 3-hydroxyacyl-[acyl-carrier-protein] dehydratase FabZ from Wolinella succinogenes (strain ATCC 29543 / DSM 1740 / CCUG 13145 / JCM 31913 / LMG 7466 / NCTC 11488 / FDC 602W) (Vibrio succinogenes).